We begin with the raw amino-acid sequence, 268 residues long: Hydroxyethylthiazole kinase (268 aa).

Methionine 47 contacts substrate. Residues arginine 122 and threonine 168 each coordinate ATP. Position 195 (alanine 195) interacts with substrate.

Belongs to the Thz kinase family. Requires Mg(2+) as cofactor.

It catalyses the reaction 5-(2-hydroxyethyl)-4-methylthiazole + ATP = 4-methyl-5-(2-phosphooxyethyl)-thiazole + ADP + H(+). The protein operates within cofactor biosynthesis; thiamine diphosphate biosynthesis; 4-methyl-5-(2-phosphoethyl)-thiazole from 5-(2-hydroxyethyl)-4-methylthiazole: step 1/1. Functionally, catalyzes the phosphorylation of the hydroxyl group of 4-methyl-5-beta-hydroxyethylthiazole (THZ). The polypeptide is Hydroxyethylthiazole kinase (Rhizobium rhizogenes (strain K84 / ATCC BAA-868) (Agrobacterium radiobacter)).